The chain runs to 351 residues: Phenoloxidase-activating factor 3 (351 aa).

The N-terminal stretch at 1 to 19 (MWLSLVILGVASAIVNVST) is a signal peptide. Asparagine 16 is a glycosylation site (N-linked (GlcNAc...) asparagine). The Clip domain maps to 22 to 73 (SCTTPNGETATCLPIESCKIFWDYVVTSGADPEINSFLRASLCRQGNYVVCC). Intrachain disulfides connect cysteine 23–cysteine 72, cysteine 33–cysteine 64, cysteine 39–cysteine 73, cysteine 89–cysteine 224, cysteine 127–cysteine 143, cysteine 167–cysteine 176, cysteine 268–cysteine 285, and cysteine 295–cysteine 326. A Peptidase S1 domain is found at 97-350 (VLGGEDTDLG…HLDWIKQNVR (254 aa)). Residue histidine 142 is the Charge relay system of the active site. Ca(2+)-binding residues include glutamate 158, aspartate 160, alanine 163, and aspartate 166. Aspartate 204 (charge relay system) is an active-site residue. Residue serine 299 is the Charge relay system of the active site.

It belongs to the peptidase S1 family. CLIP subfamily. In terms of assembly, in the active form, heterodimer of a light chain and a heavy chain; disulfide-linked. Post-translationally, proteolytically cleaved.

The protein localises to the secreted. With respect to regulation, cleavage of PPAF2 is Ca(2+)-independent. Inhibited by heparin. Its function is as follows. Serine endopeptidase which, by cleaving prophenoloxidase activating factor PPAF2, is required for the activation of the prophenoloxidase cascade probably following the recognition of pathogen-derived products. This chain is Phenoloxidase-activating factor 3, found in Holotrichia diomphalia (Korean black chafer).